The sequence spans 177 residues: von Ebner gland protein 2 (177 aa).

The N-terminal stretch at 1-18 is a signal peptide; sequence MKALLLTFSLSLLAALQA. Cysteine 80 and cysteine 172 are oxidised to a cystine.

Belongs to the calycin superfamily. Lipocalin family. Homodimer.

It is found in the secreted. Could play a role in taste reception. Could be necessary for the concentration and delivery of sapid molecules in the gustatory system. The chain is von Ebner gland protein 2 (Vegp2) from Rattus norvegicus (Rat).